A 476-amino-acid chain; its full sequence is Alkaline phosphatase H (476 aa).

The first 26 residues, 1-26, serve as a signal peptide directing secretion; sequence MTPGYPLALSLAVSMAVLGSALPAQA. Aspartate 77 provides a ligand contact to Mg(2+). Aspartate 77 is a Zn(2+) binding site. Serine 128 (phosphoserine intermediate) is an active-site residue. The residue at position 128 (serine 128) is a Phosphoserine. 2 residues coordinate Mg(2+): aspartate 179 and threonine 181. Serine 206 bears the Phosphoserine mark. Glutamine 346 is a Mg(2+) binding site. Residues aspartate 353, histidine 357, aspartate 395, histidine 396, and histidine 438 each coordinate Zn(2+).

It belongs to the alkaline phosphatase family. Mg(2+) serves as cofactor. It depends on Zn(2+) as a cofactor.

The protein localises to the secreted. It is found in the periplasm. The catalysed reaction is a phosphate monoester + H2O = an alcohol + phosphate. Has only phosphomonoesterase activity. This chain is Alkaline phosphatase H (phoA), found in Pseudomonas aeruginosa (strain UCBPP-PA14).